A 193-amino-acid chain; its full sequence is Allatostatin A (193 aa).

Positions 1–25 (MKTSSLIAMRLIIFYLLSVVGRSTA) are cleaved as a signal peptide. Residues 26-64 (AVEEAPASSLHIPRLNPLSSNLEYDEPSEKRAYAYISEY) constitute a propeptide that is removed on maturation. I74 is modified (isoleucine amide). A propeptide spanning residues 78–84 (WIDNSED) is cleaved from the precursor. Residues I94 and I105 each carry the isoleucine amide modification. Positions 109-139 (NSGYRPLGMDFSVDNMDFHSREDNLDDFIDD) are excised as a propeptide. I150 is subject to Isoleucine amide. Serine amide is present on S165. Residues 169–193 (LNDVVGPKYLLGLGKGLSENENLIQ) constitute a propeptide that is removed on maturation.

The protein belongs to the allatostatin family. In terms of tissue distribution, allatostatins A1, A2 and A3 are expressed in brain, antennal lobes, optical lobes, gnathal ganglia, the retrocerebral complex and thoracic, abdominal and ventral ganglia. Allatostain A4 is expressed in brain (at protein level).

It localises to the secreted. Functionally, may act as a neurotransmitter or neuromodulator. The chain is Allatostatin A from Camponotus floridanus (Florida carpenter ant).